The primary structure comprises 279 residues: Acetyl-coenzyme A carboxylase carboxyl transferase subunit beta (279 aa).

A CoA carboxyltransferase N-terminal domain is found at methionine 23 to proline 279. The Zn(2+) site is built by cysteine 27, cysteine 30, cysteine 46, and cysteine 49. A C4-type zinc finger spans residues cysteine 27 to cysteine 49.

This sequence belongs to the AccD/PCCB family. In terms of assembly, acetyl-CoA carboxylase is a heterohexamer composed of biotin carboxyl carrier protein (AccB), biotin carboxylase (AccC) and two subunits each of ACCase subunit alpha (AccA) and ACCase subunit beta (AccD). The cofactor is Zn(2+).

It localises to the cytoplasm. The catalysed reaction is N(6)-carboxybiotinyl-L-lysyl-[protein] + acetyl-CoA = N(6)-biotinyl-L-lysyl-[protein] + malonyl-CoA. It participates in lipid metabolism; malonyl-CoA biosynthesis; malonyl-CoA from acetyl-CoA: step 1/1. Component of the acetyl coenzyme A carboxylase (ACC) complex. Biotin carboxylase (BC) catalyzes the carboxylation of biotin on its carrier protein (BCCP) and then the CO(2) group is transferred by the transcarboxylase to acetyl-CoA to form malonyl-CoA. This is Acetyl-coenzyme A carboxylase carboxyl transferase subunit beta from Chlorobium phaeobacteroides (strain DSM 266 / SMG 266 / 2430).